We begin with the raw amino-acid sequence, 149 residues long: Transcriptional repressor NrdR (149 aa).

Residues cysteine 3–cysteine 34 fold into a zinc finger. The region spanning proline 49–aspartate 139 is the ATP-cone domain.

This sequence belongs to the NrdR family. It depends on Zn(2+) as a cofactor.

In terms of biological role, negatively regulates transcription of bacterial ribonucleotide reductase nrd genes and operons by binding to NrdR-boxes. This is Transcriptional repressor NrdR from Proteus mirabilis (strain HI4320).